The chain runs to 158 residues: Phospholipase A2 AP-PLA2-II (158 aa).

Positions Met-1–Ala-16 are cleaved as a signal peptide. Positions Gln-17 to Thr-23 are excised as a propeptide. 6 disulfide bridges follow: Cys-51–Cys-158, Cys-53–Cys-69, Cys-68–Cys-138, Cys-75–Cys-131, Cys-85–Cys-124, and Cys-109–Cys-129. Gly-54 and Gly-56 together coordinate Ca(2+). The active site involves His-72. Position 73 (Asp-73) interacts with Ca(2+). Asp-132 is a catalytic residue.

It belongs to the phospholipase A2 family. Group I subfamily. In terms of assembly, monomer. Ca(2+) serves as cofactor. In terms of tissue distribution, expressed by the venom gland.

The protein localises to the secreted. The enzyme catalyses a 1,2-diacyl-sn-glycero-3-phosphocholine + H2O = a 1-acyl-sn-glycero-3-phosphocholine + a fatty acid + H(+). Functionally, starfish phospholipase A2 (PLA2) that has hemorrhagic and capillary permeability-increasing activities and hence is considered to be deeply involved in the local inflammation. Shows hemolytic activity only in the presence of phosphatidylcholine (PC). PLA2 catalyzes the calcium-dependent hydrolysis of the 2-acyl groups in 3-sn-phosphoglycerides. This is Phospholipase A2 AP-PLA2-II from Acanthaster planci (Crown-of-thorns starfish).